The sequence spans 396 residues: Argininosuccinate synthase (396 aa).

Residue Ala9–Ser17 coordinates ATP. An L-citrulline-binding site is contributed by Tyr85. Residue Gly115 participates in ATP binding. Residues Thr117, Asn121, and Asp122 each contribute to the L-aspartate site. Asn121 is an L-citrulline binding site. Arg125, Ser173, Glu258, and Tyr270 together coordinate L-citrulline.

The protein belongs to the argininosuccinate synthase family. Type 1 subfamily. Homotetramer.

It localises to the cytoplasm. It catalyses the reaction L-citrulline + L-aspartate + ATP = 2-(N(omega)-L-arginino)succinate + AMP + diphosphate + H(+). The protein operates within amino-acid biosynthesis; L-arginine biosynthesis; L-arginine from L-ornithine and carbamoyl phosphate: step 2/3. This chain is Argininosuccinate synthase, found in Streptococcus agalactiae serotype III (strain NEM316).